We begin with the raw amino-acid sequence, 215 residues long: MPNLLHTNQSHFFFLHHPPIYTVSSKTQAFHFPQSMAPVNLRTNLSVRRTVRCMANPRRVKMVAKQIMRELSDMLLTDTVLQHAVLPEAALGADRYLSSLTTISDVEVSNDLQVVKVYVSVFGDDRGKDVAIAGLKSKAKYVRSELGKRMKLRLTPEVRFIEDEAMERGSRVIAILDKIKAEKGSGEGKTEPSDSTEDDQDWEVDDPDEDIIYVK.

The transit peptide at 1–52 directs the protein to the chloroplast; that stretch reads MPNLLHTNQSHFFFLHHPPIYTVSSKTQAFHFPQSMAPVNLRTNLSVRRTVR. Residues 183-192 are compositionally biased toward basic and acidic residues; sequence KGSGEGKTEP. The interval 183 to 210 is disordered; the sequence is KGSGEGKTEPSDSTEDDQDWEVDDPDED. Residues 194–210 show a composition bias toward acidic residues; the sequence is DSTEDDQDWEVDDPDED.

The protein belongs to the RbfA family.

It localises to the plastid. It is found in the chloroplast. The chain is Probable ribosome-binding factor A, chloroplastic from Arabidopsis thaliana (Mouse-ear cress).